The sequence spans 432 residues: 3-oxo-tetronate kinase (432 aa).

ATP contacts are provided by residues His155, Ser272, Ala324, Gly344, Glu348, 370 to 373, and Gly414; that span reads GGET.

Belongs to the four-carbon acid sugar kinase family.

The catalysed reaction is 3-dehydro-L-erythronate + ATP = 3-dehydro-4-O-phospho-L-erythronate + ADP + H(+). It carries out the reaction 3-dehydro-D-erythronate + ATP = 3-dehydro-4-O-phospho-D-erythronate + ADP + H(+). Functionally, catalyzes the ATP-dependent phosphorylation of 3-oxo-tetronate to 3-oxo-tetronate 4-phosphate. In Cupriavidus necator (strain ATCC 17699 / DSM 428 / KCTC 22496 / NCIMB 10442 / H16 / Stanier 337) (Ralstonia eutropha), this protein is 3-oxo-tetronate kinase.